The chain runs to 339 residues: tRNA N6-adenosine threonylcarbamoyltransferase (339 aa).

Positions 114 and 118 each coordinate Fe cation. Substrate contacts are provided by residues 137–141 (VVSGG), Asp-170, Gly-183, Asp-187, and Asn-277. Position 305 (Asp-305) interacts with Fe cation.

It belongs to the KAE1 / TsaD family. It depends on Fe(2+) as a cofactor.

It is found in the cytoplasm. It catalyses the reaction L-threonylcarbamoyladenylate + adenosine(37) in tRNA = N(6)-L-threonylcarbamoyladenosine(37) in tRNA + AMP + H(+). Functionally, required for the formation of a threonylcarbamoyl group on adenosine at position 37 (t(6)A37) in tRNAs that read codons beginning with adenine. Is involved in the transfer of the threonylcarbamoyl moiety of threonylcarbamoyl-AMP (TC-AMP) to the N6 group of A37, together with TsaE and TsaB. TsaD likely plays a direct catalytic role in this reaction. The chain is tRNA N6-adenosine threonylcarbamoyltransferase from Clostridium perfringens (strain ATCC 13124 / DSM 756 / JCM 1290 / NCIMB 6125 / NCTC 8237 / Type A).